Reading from the N-terminus, the 926-residue chain is Alpha-L-rhamnosidase (926 aa).

Positions 1–25 are cleaved as a signal peptide; the sequence is MILHKSVFKSYIYVLTYFVFFSVMS. Cys-26 carries the N-palmitoyl cysteine lipid modification. Cys-26 carries S-diacylglycerol cysteine lipidation. Alpha-L-rhamnose contacts are provided by residues Asp-504, 508-510, Asp-517, and Trp-569; that span reads RDE. The active-site Proton donor is the Glu-510. Glu-779 (proton acceptor) is an active-site residue. His-800 provides a ligand contact to alpha-L-rhamnose.

This sequence belongs to the glycosyl hydrolase 78 family.

The protein localises to the cell membrane. The catalysed reaction is Hydrolysis of terminal non-reducing alpha-L-rhamnose residues in alpha-L-rhamnosides.. Its function is as follows. Alpha-L-rhamnosidase involved in ulvan degradation. Ulvan is the main polysaccharide component of the Ulvales (green seaweed) cell wall. It is composed of disaccharide building blocks comprising 3-sulfated rhamnose (Rha3S) linked to D-glucuronic acid (GlcA), L-iduronic acid (IduA), or D-xylose (Xyl). Alpha-L-rhamnosidase converts Rha-Xyl-Rha3S, the product of a sulfatase acting on Rha3S-Xyl-Rha3S oligosaccharides, to Rha and Xyl-Rha3S. The enzyme is able to degrade p-nitrophenyl-alpha-L-rhamnopyranoside (PNP-Rha) in vitro. The chain is Alpha-L-rhamnosidase from Formosa agariphila (strain DSM 15362 / KCTC 12365 / LMG 23005 / KMM 3901 / M-2Alg 35-1).